A 190-amino-acid polypeptide reads, in one-letter code: dTTP/UTP pyrophosphatase (190 aa).

Aspartate 69 (proton acceptor) is an active-site residue.

The protein belongs to the Maf family. YhdE subfamily. It depends on a divalent metal cation as a cofactor.

The protein localises to the cytoplasm. The catalysed reaction is dTTP + H2O = dTMP + diphosphate + H(+). It carries out the reaction UTP + H2O = UMP + diphosphate + H(+). Functionally, nucleoside triphosphate pyrophosphatase that hydrolyzes dTTP and UTP. May have a dual role in cell division arrest and in preventing the incorporation of modified nucleotides into cellular nucleic acids. This is dTTP/UTP pyrophosphatase from Sphingopyxis alaskensis (strain DSM 13593 / LMG 18877 / RB2256) (Sphingomonas alaskensis).